The chain runs to 378 residues: GDP-mannose 3,5-epimerase 1 (378 aa).

NAD(+)-binding positions include 36–62, Asp-60, and Asp-80; that span reads GAGG…SDWK. Substrate contacts are provided by residues Gly-105 and 145-147; that span reads SAC. 2 residues coordinate NAD(+): Tyr-175 and Lys-179. The active-site Proton acceptor is the Tyr-175. Residues Asn-204, 217-219, Lys-226, 242-244, Arg-307, and Ser-357 contribute to the substrate site; these read EKA and QTR.

It belongs to the NAD(P)-dependent epimerase/dehydratase family. In terms of assembly, homodimer. The cofactor is NAD(+).

It carries out the reaction GDP-alpha-D-mannose = GDP-beta-L-gulose. The enzyme catalyses GDP-beta-L-gulose = GDP-beta-L-galactose. It functions in the pathway cofactor biosynthesis; L-ascorbate biosynthesis via GDP-alpha-D-mannose pathway; L-ascorbate from GDP-alpha-D-mannose: step 1/5. Its activity is regulated as follows. Strongly activated by NAD. Activated by NADP. Slightly activated by NADH and NADPH. Inhibited by GDP. Its function is as follows. Catalyzes a reversible epimerization of GDP-D-mannose that precedes the committed step in the biosynthesis of vitamin C (L-ascorbate), resulting in the hydrolysis of the highly energetic glycosyl-pyrophosphoryl linkage. Able to catalyze 2 distinct epimerization reactions and can release both GDP-L-galactose and GDP-L-gulose from GDP-mannose. This is GDP-mannose 3,5-epimerase 1 (GME-1) from Oryza sativa subsp. japonica (Rice).